The primary structure comprises 121 residues: Pancreatic progenitor cell differentiation and proliferation factor (121 aa).

Disordered regions lie at residues 22 to 47 (GSTSSNSSCGSSEYAGEVIPHPPGLQ) and 101 to 121 (SRQLSESSDSGKVEQGSPPPS). The span at 23 to 33 (STSSNSSCGSS) shows a compositional bias: low complexity. Positions 101-110 (SRQLSESSDS) are enriched in polar residues.

This sequence belongs to the PPDPF family.

Functionally, probable regulator of exocrine pancreas development. The polypeptide is Pancreatic progenitor cell differentiation and proliferation factor (ppdpf) (Salmo salar (Atlantic salmon)).